Here is a 617-residue protein sequence, read N- to C-terminus: 1-deoxy-D-xylulose-5-phosphate synthase (617 aa).

Residues histidine 76 and glycine 117–serine 119 each bind thiamine diphosphate. Aspartate 148 contributes to the Mg(2+) binding site. Residues glycine 149–alanine 150, asparagine 177, tyrosine 285, and glutamate 366 each bind thiamine diphosphate. Residue asparagine 177 participates in Mg(2+) binding.

The protein belongs to the transketolase family. DXPS subfamily. Homodimer. Requires Mg(2+) as cofactor. Thiamine diphosphate serves as cofactor.

The catalysed reaction is D-glyceraldehyde 3-phosphate + pyruvate + H(+) = 1-deoxy-D-xylulose 5-phosphate + CO2. Its pathway is metabolic intermediate biosynthesis; 1-deoxy-D-xylulose 5-phosphate biosynthesis; 1-deoxy-D-xylulose 5-phosphate from D-glyceraldehyde 3-phosphate and pyruvate: step 1/1. Functionally, catalyzes the acyloin condensation reaction between C atoms 2 and 3 of pyruvate and glyceraldehyde 3-phosphate to yield 1-deoxy-D-xylulose-5-phosphate (DXP). This Mannheimia succiniciproducens (strain KCTC 0769BP / MBEL55E) protein is 1-deoxy-D-xylulose-5-phosphate synthase.